The sequence spans 280 residues: Pantothenate synthetase (280 aa).

ATP is bound at residue 30–37 (MGYLHEGH). His-37 serves as the catalytic Proton donor. Gln-61 contacts (R)-pantoate. Gln-61 contributes to the beta-alanine binding site. Residue 147-150 (GQKD) participates in ATP binding. (R)-pantoate is bound at residue Gln-153. Residues Val-176 and 184-187 (MSSR) each bind ATP.

It belongs to the pantothenate synthetase family. Homodimer.

Its subcellular location is the cytoplasm. It carries out the reaction (R)-pantoate + beta-alanine + ATP = (R)-pantothenate + AMP + diphosphate + H(+). The protein operates within cofactor biosynthesis; (R)-pantothenate biosynthesis; (R)-pantothenate from (R)-pantoate and beta-alanine: step 1/1. Its function is as follows. Catalyzes the condensation of pantoate with beta-alanine in an ATP-dependent reaction via a pantoyl-adenylate intermediate. The protein is Pantothenate synthetase of Thermotoga neapolitana.